The following is an 840-amino-acid chain: Protein translocase subunit SecA (840 aa).

ATP-binding positions include glutamine 85, 103–107 (GEGKT), and aspartate 492. The disordered stretch occupies residues 787–821 (QRERVAKETGASHGGDSQEIKKKPVKKEPKVGRND). The span at 802–819 (DSQEIKKKPVKKEPKVGR) shows a compositional bias: basic and acidic residues. Zn(2+)-binding residues include cysteine 823, cysteine 825, cysteine 834, and cysteine 835.

The protein belongs to the SecA family. In terms of assembly, monomer and homodimer. Part of the essential Sec protein translocation apparatus which comprises SecA, SecYEG and auxiliary proteins SecDF. Other proteins may also be involved. Requires Zn(2+) as cofactor.

Its subcellular location is the cell membrane. It is found in the cytoplasm. The enzyme catalyses ATP + H2O + cellular proteinSide 1 = ADP + phosphate + cellular proteinSide 2.. Part of the Sec protein translocase complex. Interacts with the SecYEG preprotein conducting channel. Has a central role in coupling the hydrolysis of ATP to the transfer of proteins into and across the cell membrane, serving as an ATP-driven molecular motor driving the stepwise translocation of polypeptide chains across the membrane. The sequence is that of Protein translocase subunit SecA from Clostridium perfringens (strain 13 / Type A).